The primary structure comprises 367 residues: MTGKKLKEGFTTGACSAAAAKAATRLLLKGKPILEIETTLPNKRQVLFTVKRCQLEGEVATCSVVKDAGDDPDCTHGAELTARVRLTKENEIKLKGGDGVAVVTKAGLGLEIGQSAINPIPRKNIKEMILEELQGSSFNGAEVEISVPGGQEMAKKTMNERLGLIGGISILGTTGIVKPYSTAAFKASVIQAIQMAKEYGIDTIVLTTGGKSEKFAMDLLPNLNELSFIQVGDFIGTGIKTSVKESIRHTIIVGMIGKLSKMADGVMMTHRGGSSVNTTMLSTIARSIGVPEEIAIEIQNANTARHVLEICKVSGYKIITTKICEIVAEKCSKHAGTNIMISCYMVDFDGKLLGKCENFSPNVGLNL.

Belongs to the CbiD family.

It catalyses the reaction Co-precorrin-5B + S-adenosyl-L-methionine = Co-precorrin-6A + S-adenosyl-L-homocysteine. The protein operates within cofactor biosynthesis; adenosylcobalamin biosynthesis; cob(II)yrinate a,c-diamide from sirohydrochlorin (anaerobic route): step 6/10. Functionally, catalyzes the methylation of C-1 in cobalt-precorrin-5B to form cobalt-precorrin-6A. The protein is Cobalt-precorrin-5B C(1)-methyltransferase of Leptospira interrogans serogroup Icterohaemorrhagiae serovar copenhageni (strain Fiocruz L1-130).